Consider the following 1047-residue polypeptide: Atrial natriuretic peptide receptor 2 (1047 aa).

The first 16 residues, Met1–Gly16, serve as a signal peptide directing secretion. Residues Val17–Ile458 are Extracellular-facing. N-linked (GlcNAc...) asparagine glycans are attached at residues Asn24 and Asn35. Cys75 and Cys101 are disulfide-bonded. Asn161, Asn195, Asn244, Asn277, and Asn349 each carry an N-linked (GlcNAc...) asparagine glycan. A helical membrane pass occupies residues Val459 to Phe478. Topologically, residues Arg479–Leu1047 are cytoplasmic. Ser513 bears the Phosphoserine mark. Positions Ser513–Ile786 constitute a Protein kinase domain. Thr516 carries the post-translational modification Phosphothreonine. Residues Ser518, Ser522, Ser523, and Ser526 each carry the phosphoserine modification. The residue at position 529 (Thr529) is a Phosphothreonine. In terms of domain architecture, Guanylate cyclase spans Thr861–Glu991.

This sequence belongs to the adenylyl cyclase class-4/guanylyl cyclase family. In terms of processing, phosphorylated. Phosphorylation of the protein kinase-like domain is required for full activation by CNP. Glycosylated.

The protein resides in the cell membrane. It carries out the reaction GTP = 3',5'-cyclic GMP + diphosphate. In terms of biological role, receptor for the C-type natriuretic peptide NPPC/CNP hormone. Has guanylate cyclase activity upon binding of its ligand. May play a role in the regulation of skeletal growth. In Rattus norvegicus (Rat), this protein is Atrial natriuretic peptide receptor 2 (Npr2).